The following is a 349-amino-acid chain: Diacylglycerol O-acyltransferase 2B (349 aa).

The next 2 membrane-spanning stretches (helical) occupy residues I44–M64 and Y114–T134.

Belongs to the diacylglycerol acyltransferase family.

The protein resides in the endoplasmic reticulum membrane. The catalysed reaction is an acyl-CoA + a 1,2-diacyl-sn-glycerol = a triacyl-sn-glycerol + CoA. It participates in glycerolipid metabolism; triacylglycerol biosynthesis. Catalyzes the terminal and only committed step in triacylglycerol synthesis by using diacylglycerol and fatty acyl CoA as substrates. Required for storage lipid synthesis. This is Diacylglycerol O-acyltransferase 2B (DGAT2B) from Umbelopsis ramanniana (Oleaginous fungus).